Consider the following 283-residue polypeptide: Daunorubicin resistance ABC transporter permease protein DrrB1 (283 aa).

The 228-residue stretch at 53–280 folds into the ABC transmembrane type-2 domain; the sequence is VQLIDIVLMP…PLTMRLYRNK (228 aa). 6 helical membrane-spanning segments follow: residues 58–78, 85–105, 150–170, 171–191, 198–218, and 252–272; these read IVLM…GAFA, LQFY…VYTG, VFLG…VVGA, MLVL…LGVV, VSGT…IFVM, and FWDV…FAPL.

This sequence belongs to the ABC-2 integral membrane protein family. As to quaternary structure, the complex is probably composed of two ATP-binding proteins (DrrA1) and two transmembrane proteins (DrrB1).

Its subcellular location is the cell membrane. In terms of biological role, part of the ABC transporter complex DrrA1B1 involved in daunorubicin efflux. Responsible for the translocation of the substrate across the membrane. Confers self-resistance to daunorubicin, an antibiotic produced by S.coeruleorubidus. The polypeptide is Daunorubicin resistance ABC transporter permease protein DrrB1 (Streptomyces coeruleorubidus).